We begin with the raw amino-acid sequence, 179 residues long: MSRIGKKPIDIPKGVEVKVGEGNFVTVKGPKGELSYKFNPELKINVEENQVKVERPNDSSFMRAIHGTTRALIANMIKGVTEGFTVELEIVGIGYRANMKGKAIELQLGYSHPIHFEPPEGVQIAVEGNIIKVSGIDKQKVGQVAAKIRDFRKPDPYKGKGIRYKGEVIKLKAGKSVGK.

Belongs to the universal ribosomal protein uL6 family. Part of the 50S ribosomal subunit.

In terms of biological role, this protein binds to the 23S rRNA, and is important in its secondary structure. It is located near the subunit interface in the base of the L7/L12 stalk, and near the tRNA binding site of the peptidyltransferase center. The polypeptide is Large ribosomal subunit protein uL6 (Persephonella marina (strain DSM 14350 / EX-H1)).